A 250-amino-acid chain; its full sequence is Triosephosphate isomerase (250 aa).

Residue 9–11 coordinates substrate; sequence NWK. Histidine 100 functions as the Electrophile in the catalytic mechanism. Catalysis depends on glutamate 169, which acts as the Proton acceptor. Residues glycine 175, serine 208, and 229-230 contribute to the substrate site; that span reads GG.

The protein belongs to the triosephosphate isomerase family. In terms of assembly, homodimer.

The protein localises to the cytoplasm. The enzyme catalyses D-glyceraldehyde 3-phosphate = dihydroxyacetone phosphate. It functions in the pathway carbohydrate biosynthesis; gluconeogenesis. Its pathway is carbohydrate degradation; glycolysis; D-glyceraldehyde 3-phosphate from glycerone phosphate: step 1/1. Functionally, involved in the gluconeogenesis. Catalyzes stereospecifically the conversion of dihydroxyacetone phosphate (DHAP) to D-glyceraldehyde-3-phosphate (G3P). The chain is Triosephosphate isomerase from Synechococcus sp. (strain JA-2-3B'a(2-13)) (Cyanobacteria bacterium Yellowstone B-Prime).